Reading from the N-terminus, the 441-residue chain is Actin-related protein 4 (441 aa).

Positions 48–73 (VDVDSTKTNSNSEDSKTESEKEKSKR) are disordered. Over residues 60 to 70 (EDSKTESEKEK) the composition is skewed to basic and acidic residues.

Belongs to the actin family. ARP4 subfamily. In terms of assembly, component of the SWR1 chromatin-remodeling complex and of the NuA4 histone acetyltransferase complex. Interacts with the SWI/SNF complex. Interacts with EAF1A and EAF1B. In terms of tissue distribution, mostly expressed in flowers, and, to a lower extent, in roots, seedlings, leaves and siliques (at protein level).

It is found in the nucleus. Its subcellular location is the cytoplasm. Involved in several developmental processes including organization of plant organs, flowering time, anther development, flower senescence and fertility, probably by regulating the chromatin structure. In Arabidopsis thaliana (Mouse-ear cress), this protein is Actin-related protein 4.